A 120-amino-acid polypeptide reads, in one-letter code: Seminal plasma protein HSP-1 (120 aa).

A run of 2 repeats spans residues 1–13 and 16–28. A 2 X approximate repeats region spans residues 1–28; it reads DLQTTGADHSATVNPDQQLIMTKHSATV. 4 O-linked (GalNAc...) threonine glycosylation sites follow: Thr-5, Thr-12, Thr-22, and Thr-27. 2 Fibronectin type-II domains span residues 29-73 and 74-120; these read TPEN…YCAA and TDYA…WKYC. Disulfide bonds link Cys-34-Cys-58, Cys-48-Cys-71, Cys-79-Cys-105, and Cys-93-Cys-120.

This sequence belongs to the seminal plasma protein family. As to quaternary structure, one glycoform exists as a monomer while the other forms a heterotetramer with HSP-2 and binds heparin. O-glycosylated on Thr. There are two forms of HSP-1 which probably differ in the amount of sialylation of polysaccharide. Major component of seminal plasma.

It is found in the secreted. Functionally, could enhance the fertilizing capacity of spermatozoa upon interaction with heparin-like glycosaminoglycans present in the female genital tract. This is Seminal plasma protein HSP-1 from Equus caballus (Horse).